Consider the following 91-residue polypeptide: MANLGFPELVLIAVVILVLFGWKKLPDAARSVGRSMRIFKSEVSEMKNDGAEAEKTSAASTKTDEITSVSSTDTPQPTVTVESKDEKKHPA.

The helical transmembrane segment at 2–22 (ANLGFPELVLIAVVILVLFGW) threads the bilayer. Over residues 43–55 (VSEMKNDGAEAEK) the composition is skewed to basic and acidic residues. The tract at residues 43–91 (VSEMKNDGAEAEKTSAASTKTDEITSVSSTDTPQPTVTVESKDEKKHPA) is disordered. Residues 57–81 (SAASTKTDEITSVSSTDTPQPTVTV) are compositionally biased toward polar residues. The span at 82–91 (ESKDEKKHPA) shows a compositional bias: basic and acidic residues.

It belongs to the TatA/E family. In terms of assembly, the Tat system comprises two distinct complexes: a TatABC complex, containing multiple copies of TatA, TatB and TatC subunits, and a separate TatA complex, containing only TatA subunits. Substrates initially bind to the TatABC complex, which probably triggers association of the separate TatA complex to form the active translocon.

Its subcellular location is the cell membrane. In terms of biological role, part of the twin-arginine translocation (Tat) system that transports large folded proteins containing a characteristic twin-arginine motif in their signal peptide across membranes. TatA could form the protein-conducting channel of the Tat system. This is Sec-independent protein translocase protein TatA from Corynebacterium kroppenstedtii (strain DSM 44385 / JCM 11950 / CIP 105744 / CCUG 35717).